The sequence spans 439 residues: L-tryptophan decarboxylase (439 aa).

The protein belongs to the phosphatidylserine decarboxylase family.

It carries out the reaction L-tryptophan + H(+) = tryptamine + CO2. It participates in secondary metabolite biosynthesis. In terms of biological role, L-tryptophan decarboxylase; part of the gene cluster that mediates the biosynthesis of psilocybin, a psychotropic tryptamine-derived natural product. The first step in the pathway is the decarboxylation of L-tryptophan to tryptamine by the decarboxylase psiD. 4-hydroxy-L-tryptophan is accepted as substrate by psiD as well. The cytochrome P450 monooxygenase psiH then converts tryptamine to 4-hydroxytryptamine. The kinase psiK catalyzes the 4-O-phosphorylation step by converting 4-hydroxytryptamine into norbaeocystin. The methyltransferase psiM then catalyzes iterative methyl transfer to the amino group of norbaeocystin to yield psilocybin via a monomethylated intermediate, baeocystin. 4-hydroxy-6-methyl-l-tryptophancan also be converted the decarboxylase PsiD, kinase PsiK, and methyltransferase PsiM into respectively 6-methyl-norbaeocystin, 6-methylbaeocystin, and 6-methylpsilocybin. This chain is L-tryptophan decarboxylase, found in Psilocybe cubensis (Psychedelic mushroom).